Reading from the N-terminus, the 322-residue chain is Probable cAMP-dependent protein kinase catalytic subunit (322 aa).

The 255-residue stretch at 7-261 folds into the Protein kinase domain; it reads FEFVKVVGVG…ICEIMGHPFF (255 aa). ATP-binding positions include 13 to 21 and K37; that span reads VGVGAFGKV. D132 functions as the Proton acceptor in the catalytic mechanism. Residues 262-322 form the AGC-kinase C-terminal domain; that stretch reads KGIDWHEVES…KHLYKVSKGL (61 aa).

This sequence belongs to the protein kinase superfamily. AGC Ser/Thr protein kinase family. cAMP subfamily.

It carries out the reaction L-seryl-[protein] + ATP = O-phospho-L-seryl-[protein] + ADP + H(+). It catalyses the reaction L-threonyl-[protein] + ATP = O-phospho-L-threonyl-[protein] + ADP + H(+). The sequence is that of Probable cAMP-dependent protein kinase catalytic subunit from Encephalitozoon cuniculi (strain GB-M1) (Microsporidian parasite).